The following is a 333-amino-acid chain: Abequosyltransferase RfbV (333 aa).

Belongs to the glycosyltransferase 2 family.

It catalyses the reaction CDP-alpha-D-abequose + alpha-D-Man-(1-&gt;4)-alpha-L-Rha-(1-&gt;3)-alpha-D-Gal-di-trans,octa-cis-undecaprenyl diphosphate = alpha-D-Abe-(1-&gt;3)-alpha-D-Man-(1-&gt;4)-alpha-L-Rha-(1-&gt;3)-alpha-D-Gal-di-trans,octa-cis-undecaprenyl diphosphate + CDP + H(+). Its pathway is bacterial outer membrane biogenesis; LPS O-antigen biosynthesis. Functionally, catalyzes the transfer of CDP-abequose on D-mannosyl-L-rhamnosyl-D-galactose-1-diphospholipid to yield D-abequosyl-D-mannosyl-rhamnosyl-D-galactose-1-diphospholipid. This Salmonella typhimurium (strain LT2 / SGSC1412 / ATCC 700720) protein is Abequosyltransferase RfbV (rfbV).